Consider the following 413-residue polypeptide: MRGEIISVGTELLLGQILNTNAKYLSEKLALLGIDIYFHTNVGDNEERLKECLNIAFNRSDLIITTGGLGPTVDDITKETVASFLGLPLVENLEAKEEIIRFFEKIGQTPTMNNFKQAFFPEGAKILPNKNGTAPGCIIEKDNKIIIILPGPPSELIPMFEEYVYHYLKSKTNETIKSRVIKIFGLGESKVEEMVRPLLFNSNPTVAPLVGDGYVILRITAKGHDDKEISEMIEDMESRIRGIIGDYIYAVDEEEMEEVVVKLLQKNKLTLAVSESCTGGLLAKKITDVSGASKVFNLGVVSYSNEAKENILGVRKSTLESYGAVSYETAKEMAENVRKLANADFGLSTTGIAGPTGGTPEKPVGLVYVGFATNEEVYVKKLMLSGDRSKIRTRTVLHALDIVRRYLLGIKID.

It belongs to the CinA family.

The chain is Putative competence-damage inducible protein from Thermoanaerobacter sp. (strain X514).